We begin with the raw amino-acid sequence, 228 residues long: Fibrillarin-like rRNA/tRNA 2'-O-methyltransferase (228 aa).

S-adenosyl-L-methionine contacts are provided by residues Thr85–Thr86, Glu103–Phe104, Asp128–Ala129, and Asp148–Gln151.

The protein belongs to the methyltransferase superfamily. Fibrillarin family. As to quaternary structure, interacts with nop5. Component of box C/D small ribonucleoprotein (sRNP) particles that contain rpl7ae, FlpA and nop5, plus a guide RNA.

Its function is as follows. Involved in pre-rRNA and tRNA processing. Utilizes the methyl donor S-adenosyl-L-methionine to catalyze the site-specific 2'-hydroxyl methylation of ribose moieties in rRNA and tRNA. Site specificity is provided by a guide RNA that base pairs with the substrate. Methylation occurs at a characteristic distance from the sequence involved in base pairing with the guide RNA. This chain is Fibrillarin-like rRNA/tRNA 2'-O-methyltransferase, found in Methanococcus voltae.